Here is a 447-residue protein sequence, read N- to C-terminus: GTPase Der (447 aa).

EngA-type G domains are found at residues 4 to 165 (KIIA…PEEE) and 180 to 357 (LQIV…KIWN). GTP contacts are provided by residues 10–17 (GRPNVGKS), 57–61 (DTPGL), 119–122 (NKCE), 186–193 (GRPNAGKS), 233–237 (DTAGL), and 298–301 (NKWD). One can recognise a KH-like domain in the interval 358–443 (KKIATSKLNE…PIRFTYVKTK (86 aa)).

This sequence belongs to the TRAFAC class TrmE-Era-EngA-EngB-Septin-like GTPase superfamily. EngA (Der) GTPase family. In terms of assembly, associates with the 50S ribosomal subunit.

In terms of biological role, GTPase that plays an essential role in the late steps of ribosome biogenesis. This chain is GTPase Der, found in Rickettsia akari (strain Hartford).